Reading from the N-terminus, the 93-residue chain is Molybdopterin synthase sulfur carrier subunit (93 aa).

Position 93 is a 1-thioglycine; alternate (G93). At G93 the chain carries Glycyl adenylate; alternate.

The protein belongs to the MoaD family. MOCS2A subfamily. As to quaternary structure, heterotetramer; composed of 2 small (MOCS2A) and 2 large (MOCS2B) subunits. C-terminal thiocarboxylation occurs in 2 steps, it is first acyl-adenylated (-COAMP) via the hesA/moeB/thiF part of uba4, then thiocarboxylated (-COSH) via the rhodanese domain of uba4.

Its subcellular location is the cytoplasm. It functions in the pathway cofactor biosynthesis; molybdopterin biosynthesis. Acts as a sulfur carrier required for molybdopterin biosynthesis. Component of the molybdopterin synthase complex that catalyzes the conversion of precursor Z into molybdopterin by mediating the incorporation of 2 sulfur atoms into precursor Z to generate a dithiolene group. In the complex, serves as sulfur donor by being thiocarboxylated (-COSH) at its C-terminus by uba4. After interaction with MOCS2B, the sulfur is then transferred to precursor Z to form molybdopterin. In Pyrenophora tritici-repentis (strain Pt-1C-BFP) (Wheat tan spot fungus), this protein is Molybdopterin synthase sulfur carrier subunit.